A 106-amino-acid polypeptide reads, in one-letter code: UPF0145 protein APJL_0492 (106 aa).

Belongs to the UPF0145 family.

The chain is UPF0145 protein APJL_0492 from Actinobacillus pleuropneumoniae serotype 3 (strain JL03).